We begin with the raw amino-acid sequence, 414 residues long: Tryptophan synthase beta chain (414 aa).

At Lys108 the chain carries N6-(pyridoxal phosphate)lysine.

This sequence belongs to the TrpB family. As to quaternary structure, tetramer of two alpha and two beta chains. It depends on pyridoxal 5'-phosphate as a cofactor.

The enzyme catalyses (1S,2R)-1-C-(indol-3-yl)glycerol 3-phosphate + L-serine = D-glyceraldehyde 3-phosphate + L-tryptophan + H2O. Its pathway is amino-acid biosynthesis; L-tryptophan biosynthesis; L-tryptophan from chorismate: step 5/5. Its function is as follows. The beta subunit is responsible for the synthesis of L-tryptophan from indole and L-serine. The chain is Tryptophan synthase beta chain from Beijerinckia indica subsp. indica (strain ATCC 9039 / DSM 1715 / NCIMB 8712).